Here is a 496-residue protein sequence, read N- to C-terminus: Cytochrome c-552 (496 aa).

The first 23 residues, 1-23 (MKKYKFLFAISIIAIGLMTVLLA), serve as a signal peptide directing secretion. His100 contributes to the heme c binding site. Heme-binding residues include Cys128, Cys131, and Lys132. Heme c contacts are provided by Cys166, Cys169, His170, Cys210, Cys213, and His214. Ca(2+)-binding residues include Glu216, Tyr217, Lys269, and Gln271. Tyr217 provides a ligand contact to substrate. His272 provides a ligand contact to substrate. His283, Cys290, Cys293, His294, His308, Cys321, Cys324, His325, and His400 together coordinate heme c.

The protein belongs to the cytochrome c-552 family. The cofactor is Ca(2+). Requires heme c as cofactor.

The protein localises to the periplasm. The catalysed reaction is 6 Fe(III)-[cytochrome c] + NH4(+) + 2 H2O = 6 Fe(II)-[cytochrome c] + nitrite + 8 H(+). It functions in the pathway nitrogen metabolism; nitrate reduction (assimilation). In terms of biological role, catalyzes the reduction of nitrite to ammonia, consuming six electrons in the process. The sequence is that of Cytochrome c-552 from Aliarcobacter butzleri (strain RM4018) (Arcobacter butzleri).